The chain runs to 90 residues: Protein RL8A (90 aa).

Residues 15 to 34 (WTCEGLLLLLGLLVLFFHHH) traverse the membrane as a helical segment. The segment at 55 to 90 (HESGWYSSDDDGDRDGDEETGESHNRNSVGLSAVFS) is disordered. A compositionally biased stretch (acidic residues) spans 62–74 (SDDDGDRDGDEET). Positions 80 to 90 (RNSVGLSAVFS) are enriched in polar residues.

It is found in the host membrane. This chain is Protein RL8A (RL8A), found in Homo sapiens (Human).